We begin with the raw amino-acid sequence, 176 residues long: Ribosome maturation factor RimM (176 aa).

Residues 96 to 176 (PEDEFYWRDL…QILVDWDPDF (81 aa)) enclose the PRC barrel domain.

The protein belongs to the RimM family. As to quaternary structure, binds ribosomal protein uS19.

Its subcellular location is the cytoplasm. In terms of biological role, an accessory protein needed during the final step in the assembly of 30S ribosomal subunit, possibly for assembly of the head region. Essential for efficient processing of 16S rRNA. May be needed both before and after RbfA during the maturation of 16S rRNA. It has affinity for free ribosomal 30S subunits but not for 70S ribosomes. The chain is Ribosome maturation factor RimM from Shewanella woodyi (strain ATCC 51908 / MS32).